Reading from the N-terminus, the 150-residue chain is MTRKQKRLAIIGGGVGFLTAAVLLVMFAFSQAVAYFYVPGDLAKADLAPGTRIRLGGLVEAGSVKRGDGKTVTFSVTDTLAVVPVTYTGILPDLFREGQGVVAEGAFVAGSSVFVADTVLAKHDETYMPKDVADRLKAQGVTLGGKENIQ.

The Cytoplasmic portion of the chain corresponds to 1 to 7 (MTRKQKR). The chain crosses the membrane as a helical; Signal-anchor for type II membrane protein span at residues 8-28 (LAIIGGGVGFLTAAVLLVMFA). Topologically, residues 29 to 150 (FSQAVAYFYV…VTLGGKENIQ (122 aa)) are periplasmic. Heme is bound by residues H123 and Y127.

The protein belongs to the CcmE/CycJ family.

It localises to the cell inner membrane. In terms of biological role, heme chaperone required for the biogenesis of c-type cytochromes. Transiently binds heme delivered by CcmC and transfers the heme to apo-cytochromes in a process facilitated by CcmF and CcmH. This Sinorhizobium fredii (strain NBRC 101917 / NGR234) protein is Cytochrome c-type biogenesis protein CcmE.